We begin with the raw amino-acid sequence, 405 residues long: N-methyltransferase nanE (405 aa).

Residues 238 to 239 (GG), Asp261, and 290 to 291 (HH) contribute to the S-adenosyl-L-methionine site.

This sequence belongs to the class I-like SAM-binding methyltransferase superfamily. Cation-independent O-methyltransferase family.

It participates in secondary metabolite biosynthesis. In terms of biological role, N-methyltransferase; part of the gene cluster that mediates the biosynthesis of the benzazepine alkaloid nanangelenin A which contains an unprecedented 3,4-dihydro-1-benzazepine-2,5-dione-N-prenyl-N-acetoxy-anthranilamide scaffold. The first step of nanangelenin biosynthesis is catalyzed by the indoleamine 2,3-dioxygenase nanC which produces N-formyl-kynurenine through the catabolism of tryptophan. The two-module NRPS nanA then utilizes anthranilate (Ant) and L-kynurenine (L-Kyn) to assemble the dipeptide product nanangelenin B. The first adenylation domain of nanA (A1) loads anthranilate onto the T1 domain, while A2 loads kynurenine, generated through spontaneous nonenzymatic deformylation of the nanC-supplied N-formyl-kynurenine. The peptide bond formation between the tethered amino acids is catalyzed by the first condensation domain (C1) between anthranilate's carbonyl carbon and kynurenine's aliphatic primary amine. The second C domain (C2) catalyzes the final cyclization event between the aromatic amine of kynurenine and the tethered carbonyl carbon, yielding nanangelenin B. The terminal T3 domain enhances the catalytic efficiency of C2, suggesting the T2-tethered Ant-L-Kyn is transferred to T3 prior to cyclization by C2. Once released from nanA, nanangelenin B is then prenylated by the prenyltransferase nanD to form nanangelenin C. Nanangelenin C is then N-hydroxylated by the FAD-dependent monooxygenase nanF and further acetylated by the acetyltransferase nanB to yield nanangelenin F. Finally, the N-methyltransferase nanE methylates the amide nitrogen of 1-benzazepine to convert nanangelenin F into nanangelenin A. NanE is also able to methylate most of the intermediates of the pathway such as nanangelenin B and nanangelenin C to produce nanangelenin D and nanangelenin E, respectively. This is N-methyltransferase nanE from Aspergillus nanangensis.